Reading from the N-terminus, the 90-residue chain is uncharacterized protein (90 aa).

This is an uncharacterized protein from Escherichia coli O157:H7.